Here is a 135-residue protein sequence, read N- to C-terminus: 30 kDa antigenic glycoprotein (135 aa).

The signal sequence occupies residues 1–5 (GNTYS). 4 N-linked (GlcNAc...) asparagine glycosylation sites follow: Asn-22, Asn-31, Asn-57, and Asn-73.

The protein to H.contortus 15 kDa excretory/secretory protein.

The protein resides in the secreted. In Trichostrongylus colubriformis (Black scour worm), this protein is 30 kDa antigenic glycoprotein.